The sequence spans 177 residues: Small ribosomal subunit protein uS13 (177 aa).

Basic residues predominate over residues 132-145; that stretch reads GVRHKRGQKVRGQR. The segment at 132–177 is disordered; sequence GVRHKRGQKVRGQRTKSTGRTEGTIGVNVEAIKEEQAEDAAAEDDE. A compositionally biased stretch (acidic residues) spans 167 to 177; it reads QAEDAAAEDDE.

It belongs to the universal ribosomal protein uS13 family. In terms of assembly, part of the 30S ribosomal subunit. Forms a loose heterodimer with protein S19. Forms two bridges to the 50S subunit in the 70S ribosome.

Located at the top of the head of the 30S subunit, it contacts several helices of the 16S rRNA. In the 70S ribosome it contacts the 23S rRNA (bridge B1a) and protein L5 of the 50S subunit (bridge B1b), connecting the 2 subunits; these bridges are implicated in subunit movement. This Haloarcula marismortui (strain ATCC 43049 / DSM 3752 / JCM 8966 / VKM B-1809) (Halobacterium marismortui) protein is Small ribosomal subunit protein uS13.